A 652-amino-acid polypeptide reads, in one-letter code: Thioredoxin reductase 3 (652 aa).

Residues 1–12 (MEKPPSPPPPPR) are compositionally biased toward pro residues. A disordered region spans residues 1–62 (MEKPPSPPPP…TSRPSSEARE (62 aa)). Position 34 is an asymmetric dimethylarginine; alternate (R34). R34 is modified (omega-N-methylarginine; alternate). Position 50 is a phosphoserine (S50). A Glutaredoxin domain is found at 65–165 (RRRLRDLIEG…KLLQDDSAHD (101 aa)). An FAD-binding site is contributed by 167 to 196 (DLIIIGGGSGGLSCAKEAANLGKKVMVLDF). Residues C212 and C217 are joined by a disulfide bond. Residue K388 is modified to N6-succinyllysine. H625 functions as the Proton acceptor in the catalytic mechanism. The cysteinyl-selenocysteine (Cys-Sec) cross-link spans 650-651 (CU). Position 651 (U651) is a non-standard amino acid, selenocysteine.

It belongs to the class-I pyridine nucleotide-disulfide oxidoreductase family. Homodimer. FAD is required as a cofactor. As to expression, expressed preferentially in testis where it is found in spermatids and spermatocytes but not in sperm. In elongating spermatids, expressed at the site of mitochondrial sheath formation. Low levels in other tissues including heart, lung, liver, kidney, brain, muscle and prostate.

Its subcellular location is the cytoplasm. It localises to the nucleus. The protein localises to the microsome. It is found in the endoplasmic reticulum. The catalysed reaction is [thioredoxin]-dithiol + NADP(+) = [thioredoxin]-disulfide + NADPH + H(+). Its function is as follows. Displays thioredoxin reductase, glutaredoxin and glutathione reductase activities. Catalyzes disulfide bond isomerization. Promotes disulfide bond formation between GPX4 and various sperm proteins and may play a role in sperm maturation by promoting formation of sperm structural components. The sequence is that of Thioredoxin reductase 3 from Mus musculus (Mouse).